The primary structure comprises 218 residues: Large ribosomal subunit protein uL3 (218 aa).

Belongs to the universal ribosomal protein uL3 family. In terms of assembly, part of the 50S ribosomal subunit. Forms a cluster with proteins L14 and L19.

Functionally, one of the primary rRNA binding proteins, it binds directly near the 3'-end of the 23S rRNA, where it nucleates assembly of the 50S subunit. The chain is Large ribosomal subunit protein uL3 from Mycolicibacterium gilvum (strain PYR-GCK) (Mycobacterium gilvum (strain PYR-GCK)).